Consider the following 201-residue polypeptide: 3-isopropylmalate dehydratase small subunit (201 aa).

This sequence belongs to the LeuD family. LeuD type 1 subfamily. As to quaternary structure, heterodimer of LeuC and LeuD.

It carries out the reaction (2R,3S)-3-isopropylmalate = (2S)-2-isopropylmalate. It functions in the pathway amino-acid biosynthesis; L-leucine biosynthesis; L-leucine from 3-methyl-2-oxobutanoate: step 2/4. Catalyzes the isomerization between 2-isopropylmalate and 3-isopropylmalate, via the formation of 2-isopropylmaleate. The sequence is that of 3-isopropylmalate dehydratase small subunit from Shewanella baltica (strain OS223).